Consider the following 151-residue polypeptide: UPF0178 protein VSAL_I0701 (151 aa).

Belongs to the UPF0178 family.

The protein is UPF0178 protein VSAL_I0701 of Aliivibrio salmonicida (strain LFI1238) (Vibrio salmonicida (strain LFI1238)).